A 496-amino-acid chain; its full sequence is uncharacterized protein (496 aa).

Positions 118–129 are enriched in basic and acidic residues; it reads LDRPFIKPRREN. The disordered stretch occupies residues 118-187; that stretch reads LDRPFIKPRR…NPHQSNRNTS (70 aa). Residues 151 to 187 show a composition bias toward polar residues; the sequence is TSDSQYASPFENHSITNLPIGQKQPFNNPHQSNRNTS.

This is an uncharacterized protein from Acanthamoeba polyphaga mimivirus (APMV).